The sequence spans 475 residues: Ribulose bisphosphate carboxylase large chain (475 aa).

Positions methionine 1 to valine 2 are excised as a propeptide. Proline 3 carries the N-acetylproline modification. Position 14 is an N6,N6,N6-trimethyllysine (lysine 14). Substrate-binding residues include asparagine 123 and threonine 173. Catalysis depends on lysine 175, which acts as the Proton acceptor. Lysine 177 is a binding site for substrate. Mg(2+) is bound by residues lysine 201, aspartate 203, and glutamate 204. The residue at position 201 (lysine 201) is an N6-carboxylysine. Histidine 294 serves as the catalytic Proton acceptor. Residues arginine 295, histidine 327, and serine 379 each coordinate substrate.

The protein belongs to the RuBisCO large chain family. Type I subfamily. As to quaternary structure, heterohexadecamer of 8 large chains and 8 small chains; disulfide-linked. The disulfide link is formed within the large subunit homodimers. Requires Mg(2+) as cofactor. Post-translationally, the disulfide bond which can form in the large chain dimeric partners within the hexadecamer appears to be associated with oxidative stress and protein turnover.

Its subcellular location is the plastid. It localises to the chloroplast. The enzyme catalyses 2 (2R)-3-phosphoglycerate + 2 H(+) = D-ribulose 1,5-bisphosphate + CO2 + H2O. The catalysed reaction is D-ribulose 1,5-bisphosphate + O2 = 2-phosphoglycolate + (2R)-3-phosphoglycerate + 2 H(+). Its function is as follows. RuBisCO catalyzes two reactions: the carboxylation of D-ribulose 1,5-bisphosphate, the primary event in carbon dioxide fixation, as well as the oxidative fragmentation of the pentose substrate in the photorespiration process. Both reactions occur simultaneously and in competition at the same active site. This is Ribulose bisphosphate carboxylase large chain from Tetradesmus obliquus (Green alga).